The primary structure comprises 513 residues: ATP synthase subunit alpha 2 (513 aa).

152–159 (GDSKTGKT) is an ATP binding site.

This sequence belongs to the ATPase alpha/beta chains family. In terms of assembly, F-type ATPases have 2 components, CF(1) - the catalytic core - and CF(0) - the membrane proton channel. CF(1) has five subunits: alpha(3), beta(3), gamma(1), delta(1), epsilon(1). CF(0) has three main subunits: a(1), b(2) and c(9-12). The alpha and beta chains form an alternating ring which encloses part of the gamma chain. CF(1) is attached to CF(0) by a central stalk formed by the gamma and epsilon chains, while a peripheral stalk is formed by the delta and b chains.

It localises to the cell membrane. The catalysed reaction is ATP + H2O + 4 H(+)(in) = ADP + phosphate + 5 H(+)(out). Produces ATP from ADP in the presence of a proton gradient across the membrane. The alpha chain is a regulatory subunit. This is ATP synthase subunit alpha 2 from Mycoplasmopsis pulmonis (strain UAB CTIP) (Mycoplasma pulmonis).